A 652-amino-acid polypeptide reads, in one-letter code: Sodium-dependent phosphate transporter 2 (652 aa).

The Extracellular portion of the chain corresponds to 1 to 5 (MAMDE). A helical membrane pass occupies residues 6–26 (YLWMVILGFIIAFILAFSVGA). Over 27 to 46 (NDVANSFGTAVGSGVVTLRQ) the chain is Cytoplasmic. The chain crosses the membrane as a helical span at residues 47 to 67 (ACILASIFETTGSVLLGAKVG). Residues 68 to 86 (ETIRKGIIDVNLYNETVET) are Extracellular-facing. The N-linked (GlcNAc...) asparagine glycan is linked to Asn-81. A helical transmembrane segment spans residues 87–107 (LMAGEVSAMVGSAVWQLIASF). At 108-109 (LR) the chain is on the cytoplasmic side. A helical membrane pass occupies residues 110-130 (LPISGTHCIVGSTIGFSLVAI). At 131–142 (GTKGVQWMELVK) the chain is on the extracellular side. A helical membrane pass occupies residues 143–163 (IVASWFISPLLSGFMSGLLFV). At 164–190 (LIRIFILKKEDPVPNGLRALPVFYAAT) the chain is on the cytoplasmic side. A helical membrane pass occupies residues 191 to 211 (IAINVFSIMYTGAPVLGLVLP). Over 212 to 213 (MW) the chain is Extracellular. Residues 214–234 (AIALISFGVALLFAFFVWLFV) form a helical membrane-spanning segment. The Cytoplasmic segment spans residues 235–482 (CPWMRRKITG…EEKEEKDAPE (248 aa)). Phosphoserine occurs at positions 253, 256, 259, and 268. The interval 273 to 307 (ELPGAKANDDSTIPLTGAAGETLGTSEGTSAGSHP) is disordered. Positions 295 to 304 (LGTSEGTSAG) are enriched in polar residues. Residues Ser-316 and Ser-385 each carry the phosphoserine modification. Residues 458 to 477 (SELADPDQPREDPAEEEKEE) are disordered. Residues 483–503 (VHLLFHFLQVLTACFGSFAHG) form a helical membrane-spanning segment. The Extracellular portion of the chain corresponds to 504–530 (GNDVSNAIGPLVALWLIYKQGGVTQEA). A helical membrane pass occupies residues 531–551 (ATPVWLLFYGGVGICTGLWVW). Over 552 to 571 (GRRVIQTMGKDLTPITPSSG) the chain is Cytoplasmic. Residues 572 to 586 (FTIELASAFTVVIAS) form a helical membrane-spanning segment. The Extracellular portion of the chain corresponds to 587–593 (NIGLPVS). A helical membrane pass occupies residues 594 to 609 (TTHCKVGSVVAVGWIR). Over 610–621 (SRKAVDWRLFRN) the chain is Cytoplasmic. Residues 622–642 (IFVAWFVTVPVAGLFSAAVMA) traverse the membrane as a helical segment. At 643 to 652 (LLMYGILPYV) the chain is on the extracellular side.

It belongs to the inorganic phosphate transporter (PiT) (TC 2.A.20) family. Homodimer. As to expression, ubiquitously expressed.

It localises to the cell membrane. The protein localises to the apical cell membrane. It carries out the reaction 2 Na(+)(out) + phosphate(out) = 2 Na(+)(in) + phosphate(in). Sodium-phosphate symporter which preferentially transports the monovalent form of phosphate with a stoichiometry of two sodium ions per phosphate ion. Plays a critical role in the determination of bone quality and strength by providing phosphate for bone mineralization. Required to maintain normal cerebrospinal fluid phosphate levels. Mediates phosphate-induced calcification of vascular smooth muscle cells (VCMCs) and can functionally compensate for loss of SLC20A1 in VCMCs. Its function is as follows. (Microbial infection) Functions as a retroviral receptor and confers human cells susceptibility to infection to amphotropic murine leukemia virus (A-MuLV), 10A1 murine leukemia virus (10A1 MLV) and some feline leukemia virus subgroup B (FeLV-B) variants. In Homo sapiens (Human), this protein is Sodium-dependent phosphate transporter 2 (SLC20A2).